A 576-amino-acid polypeptide reads, in one-letter code: Arginine--tRNA ligase (576 aa).

Positions 122-132 match the 'HIGH' region motif; that stretch reads PNVAKQMHVGH.

The protein belongs to the class-I aminoacyl-tRNA synthetase family. As to quaternary structure, monomer.

The protein localises to the cytoplasm. The enzyme catalyses tRNA(Arg) + L-arginine + ATP = L-arginyl-tRNA(Arg) + AMP + diphosphate. The protein is Arginine--tRNA ligase of Yersinia pseudotuberculosis serotype I (strain IP32953).